We begin with the raw amino-acid sequence, 65 residues long: uncharacterized protein (65 aa).

The first 16 residues, 1–16 (MMHVCSLLVSFDVVKS), serve as a signal peptide directing secretion.

This is an uncharacterized protein from Saccharomyces cerevisiae (strain ATCC 204508 / S288c) (Baker's yeast).